Reading from the N-terminus, the 263-residue chain is uncharacterized protein (263 aa).

The signal sequence occupies residues 1–22 (MEYLKRLALLISVIILTIFIMG). C23 is lipidated: N-palmitoyl cysteine. The S-diacylglycerol cysteine moiety is linked to residue C23.

It belongs to the staphylococcal tandem lipoprotein family.

The protein resides in the cell membrane. This is an uncharacterized protein from Staphylococcus aureus (strain COL).